Here is a 429-residue protein sequence, read N- to C-terminus: Serine--tRNA ligase (429 aa).

Position 235 to 237 (235 to 237) interacts with L-serine; the sequence is TAE. 266–268 contacts ATP; that stretch reads RSE. Glutamate 289 lines the L-serine pocket. Position 353–356 (353–356) interacts with ATP; that stretch reads EISS. Serine 389 contributes to the L-serine binding site.

It belongs to the class-II aminoacyl-tRNA synthetase family. Type-1 seryl-tRNA synthetase subfamily. In terms of assembly, homodimer. The tRNA molecule binds across the dimer.

It is found in the cytoplasm. It carries out the reaction tRNA(Ser) + L-serine + ATP = L-seryl-tRNA(Ser) + AMP + diphosphate + H(+). The enzyme catalyses tRNA(Sec) + L-serine + ATP = L-seryl-tRNA(Sec) + AMP + diphosphate + H(+). It participates in aminoacyl-tRNA biosynthesis; selenocysteinyl-tRNA(Sec) biosynthesis; L-seryl-tRNA(Sec) from L-serine and tRNA(Sec): step 1/1. Its function is as follows. Catalyzes the attachment of serine to tRNA(Ser). Is also able to aminoacylate tRNA(Sec) with serine, to form the misacylated tRNA L-seryl-tRNA(Sec), which will be further converted into selenocysteinyl-tRNA(Sec). This chain is Serine--tRNA ligase, found in Actinobacillus succinogenes (strain ATCC 55618 / DSM 22257 / CCUG 43843 / 130Z).